The following is a 435-amino-acid chain: Oocyte zinc finger protein XlCOF22 (435 aa).

The segment at 71–92 (NANTSAHFSRNRDSDKHERTHT) is disordered. The segment covering 80 to 91 (RNRDSDKHERTH) has biased composition (basic and acidic residues). C2H2-type zinc fingers lie at residues 97–120 (HSCS…RQSH), 126–148 (FSCS…QRTH), 154–176 (FCCF…RRTH), 182–204 (FSCL…QRTH), 210–232 (FSCL…QRTH), 238–260 (FSCL…QRTH), 266–288 (FSCF…QRTH), 294–316 (FSCS…QRTH), 322–345 (YSCS…RRTH), 351–373 (FSCS…QRTH), 379–402 (FSCS…RQTH), and 408–430 (VSCS…FKIH).

This sequence belongs to the krueppel C2H2-type zinc-finger protein family.

The protein localises to the nucleus. May be involved in transcriptional regulation. The chain is Oocyte zinc finger protein XlCOF22 from Xenopus laevis (African clawed frog).